Here is a 57-residue protein sequence, read N- to C-terminus: DNA gyrase inhibitor YacG (57 aa).

Residues cysteine 10, cysteine 13, cysteine 25, and cysteine 29 each coordinate Zn(2+).

It belongs to the DNA gyrase inhibitor YacG family. Interacts with GyrB. The cofactor is Zn(2+).

Its function is as follows. Inhibits all the catalytic activities of DNA gyrase by preventing its interaction with DNA. Acts by binding directly to the C-terminal domain of GyrB, which probably disrupts DNA binding by the gyrase. This Brucella melitensis biotype 1 (strain ATCC 23456 / CCUG 17765 / NCTC 10094 / 16M) protein is DNA gyrase inhibitor YacG.